Here is an 82-residue protein sequence, read N- to C-terminus: Cytochrome c-551 (82 aa).

The heme c site is built by Cys-12, Cys-15, His-16, and Met-61.

Post-translationally, binds 1 heme c group covalently per subunit.

In Azotobacter vinelandii, this protein is Cytochrome c-551.